A 593-amino-acid polypeptide reads, in one-letter code: NADH-quinone oxidoreductase subunit C/D (593 aa).

The NADH dehydrogenase I subunit C stretch occupies residues 1–184 (MTADNAIFIP…DPYSLTLAKQ (184 aa)). Residues 208–593 (DYMFLNLGPN…IDFVMADVDR (386 aa)) are NADH dehydrogenase I subunit D.

It in the N-terminal section; belongs to the complex I 30 kDa subunit family. This sequence in the C-terminal section; belongs to the complex I 49 kDa subunit family. As to quaternary structure, NDH-1 is composed of 13 different subunits. Subunits NuoB, CD, E, F, and G constitute the peripheral sector of the complex.

The protein resides in the cell inner membrane. It carries out the reaction a quinone + NADH + 5 H(+)(in) = a quinol + NAD(+) + 4 H(+)(out). Its function is as follows. NDH-1 shuttles electrons from NADH, via FMN and iron-sulfur (Fe-S) centers, to quinones in the respiratory chain. The immediate electron acceptor for the enzyme in this species is believed to be ubiquinone. Couples the redox reaction to proton translocation (for every two electrons transferred, four hydrogen ions are translocated across the cytoplasmic membrane), and thus conserves the redox energy in a proton gradient. The protein is NADH-quinone oxidoreductase subunit C/D of Pseudomonas putida (strain ATCC 47054 / DSM 6125 / CFBP 8728 / NCIMB 11950 / KT2440).